Reading from the N-terminus, the 278-residue chain is Probable endonuclease 4 (278 aa).

Zn(2+)-binding residues include histidine 66, histidine 106, glutamate 142, aspartate 176, histidine 179, histidine 213, aspartate 226, histidine 228, and glutamate 258.

It belongs to the AP endonuclease 2 family. Requires Zn(2+) as cofactor.

It carries out the reaction Endonucleolytic cleavage to 5'-phosphooligonucleotide end-products.. Endonuclease IV plays a role in DNA repair. It cleaves phosphodiester bonds at apurinic or apyrimidinic (AP) sites, generating a 3'-hydroxyl group and a 5'-terminal sugar phosphate. The sequence is that of Probable endonuclease 4 from Halothermothrix orenii (strain H 168 / OCM 544 / DSM 9562).